The following is a 228-amino-acid chain: 7-cyano-7-deazaguanine synthase (228 aa).

8–18 serves as a coordination point for ATP; that stretch reads LSGGMDSATTL. Zn(2+)-binding residues include cysteine 188, cysteine 198, cysteine 201, and cysteine 204.

It belongs to the QueC family. It depends on Zn(2+) as a cofactor.

The enzyme catalyses 7-carboxy-7-deazaguanine + NH4(+) + ATP = 7-cyano-7-deazaguanine + ADP + phosphate + H2O + H(+). It participates in purine metabolism; 7-cyano-7-deazaguanine biosynthesis. In terms of biological role, catalyzes the ATP-dependent conversion of 7-carboxy-7-deazaguanine (CDG) to 7-cyano-7-deazaguanine (preQ(0)). This is 7-cyano-7-deazaguanine synthase from Nitrosomonas europaea (strain ATCC 19718 / CIP 103999 / KCTC 2705 / NBRC 14298).